Consider the following 1131-residue polypeptide: Kinesin-like protein CG14535 (1131 aa).

Polar residues predominate over residues 1-11; sequence MATTSTSNMSR. Residues 1-25 form a disordered region; it reads MATTSTSNMSRNGGFCGALQRAPPP. The region spanning 44-396 is the Kinesin motor domain; it reads KVKVMLRVAD…IQIASRIHRL (353 aa). 4 disordered regions span residues 472–494, 693–753, 905–926, and 1016–1072; these read ALKG…MMMK, DLPD…SRDI, PAYR…QGSL, and TSSE…QRHR. The span at 483-494 shows a compositional bias: low complexity; the sequence is SKSASNSPMMMK. The segment covering 1016 to 1032 has biased composition (polar residues); sequence TSSEAYDSGHDSNSTPR.

It belongs to the TRAFAC class myosin-kinesin ATPase superfamily. Kinesin family. KIF26 subfamily.

The protein localises to the cytoplasm. It localises to the cytoskeleton. The chain is Kinesin-like protein CG14535 from Drosophila melanogaster (Fruit fly).